The following is a 220-amino-acid chain: Eukaryotic translation initiation factor 3 subunit B (220 aa).

The interval 1–94 (MPEPIAFDES…LIIELDSAAA (94 aa)) is sufficient for interaction with HCR1 and TIF32. A sufficient for interaction with PIC8 region spans residues 1 to 220 (MPEPIAFDES…GVQAWGGERI (220 aa)). Residues 37–120 (HFVICDGAPI…HRLAVNKLPD (84 aa)) form the RRM domain.

It belongs to the eIF-3 subunit B family. Component of the eukaryotic translation initiation factor 3 (eIF-3) complex.

Its subcellular location is the cytoplasm. RNA-binding component of the eukaryotic translation initiation factor 3 (eIF-3) complex, which is involved in protein synthesis of a specialized repertoire of mRNAs and, together with other initiation factors, stimulates binding of mRNA and methionyl-tRNAi to the 40S ribosome. The eIF-3 complex specifically targets and initiates translation of a subset of mRNAs involved in cell proliferation. The sequence is that of Eukaryotic translation initiation factor 3 subunit B (TIF32) from Pichia angusta (Yeast).